The chain runs to 713 residues: Meiotic activator RIM4 (713 aa).

A disordered region spans residues 1–90 (MKTEISTADS…TSTSTESRGR (90 aa)). Basic and acidic residues predominate over residues 21 to 31 (ADSELVIREDI). Residues 50 to 71 (GEDSDTDSDNFLQDPEDDVDEE) show a composition bias toward acidic residues. Over residues 74–90 (GRGTVTTTSTSTESRGR) the composition is skewed to low complexity. Residues 93–172 (SCIFVASLAA…RRLRCEPAKV (80 aa)) form the RRM 1 domain. Residues 276–337 (HQNNGIINND…SDGIYDDEDK (62 aa)) form a disordered region. Positions 278 to 298 (NNGIINNDGSNNNDNNNSNNN) are enriched in low complexity. A compositionally biased stretch (basic and acidic residues) spans 299 to 327 (NREDSRRNGDVIEEECGHVHGSDSEEKLT). The RRM 2 domain maps to 346–420 (RSIFVGQLDK…KTMHVQYKEV (75 aa)). Positions 524–609 (KSMPNSWSSP…KRYARRSSYG (86 aa)) are disordered. Serine 525 carries the post-translational modification Phosphoserine. Over residues 526 to 546 (MPNSWSSPSSKSVNSENESVN) the composition is skewed to low complexity. A compositionally biased stretch (polar residues) spans 563-574 (GRYNAANSFTTY). Positions 575–594 (NNSSAGNSNNNNNNNNSNSN) are enriched in low complexity.

In terms of processing, polyubiquitinated by RSP5.

In terms of biological role, positive regulator of sporulation-specific genes and of sporulation. Required for premeiotic DNA synthesis and meiotic chromosomal segregation. May act in a nutritional signaling pathway. The chain is Meiotic activator RIM4 (RIM4) from Saccharomyces cerevisiae (strain ATCC 204508 / S288c) (Baker's yeast).